A 74-amino-acid chain; its full sequence is Defensin Lc-def (74 aa).

The N-terminal stretch at 1–27 (MEKKTVAALSFLFIVLFVAQEIAVTEA) is a signal peptide. 4 disulfides stabilise this stretch: Cys30–Cys74, Cys41–Cys62, Cys47–Cys68, and Cys51–Cys70.

It is found in the secreted. Its function is as follows. Has antifungal activity against the phytopathogenic fungus A.niger VKM F-2259, but not against A.alternata VKM F-3047. Does not inhibit trypsin or chymotrypsin. This is Defensin Lc-def from Lens culinaris subsp. culinaris (Cultivated lentil).